The sequence spans 272 residues: Ribosomal RNA small subunit methyltransferase A (272 aa).

S-adenosyl-L-methionine contacts are provided by Asn-16, Leu-18, Gly-43, Glu-64, Asp-89, and Asn-110.

It belongs to the class I-like SAM-binding methyltransferase superfamily. rRNA adenine N(6)-methyltransferase family. RsmA subfamily.

Its subcellular location is the cytoplasm. The catalysed reaction is adenosine(1518)/adenosine(1519) in 16S rRNA + 4 S-adenosyl-L-methionine = N(6)-dimethyladenosine(1518)/N(6)-dimethyladenosine(1519) in 16S rRNA + 4 S-adenosyl-L-homocysteine + 4 H(+). Its function is as follows. Specifically dimethylates two adjacent adenosines (A1518 and A1519) in the loop of a conserved hairpin near the 3'-end of 16S rRNA in the 30S particle. May play a critical role in biogenesis of 30S subunits. The chain is Ribosomal RNA small subunit methyltransferase A from Pseudomonas fluorescens (strain Pf0-1).